A 2219-amino-acid chain; its full sequence is E3 ubiquitin-protein ligase Ubr3 (2219 aa).

2 disordered regions span residues 1–48 and 78–134; these read MDED…DLSS and AAGA…SALS. Positions 20–29 are enriched in basic and acidic residues; that stretch reads VREQTHHPPM. Residues 31-42 show a composition bias toward acidic residues; the sequence is EDQELDNEDGSS. Positions 114 to 134 are enriched in low complexity; it reads GPTTTTSSGTAAESGAASALS. A UBR-type zinc finger spans residues 222-293; that stretch reads AKCGLVWVPH…AEGFCSDHGI (72 aa). Disordered regions lie at residues 1348-1367 and 1440-1464; these read SFSL…TMDV and QREK…KARE. Residues 1353-1367 show a composition bias toward acidic residues; that stretch reads DGEDQSSDDDSTMDV. An RING-type; degenerate zinc finger spans residues 1607–1643; the sequence is CGHHVHLSCLEAYLKTLYTTQRQPVQDRGEFYCPVCR. Disordered regions lie at residues 1872-1902 and 1935-1954; these read VGSD…QQQQ and SAAA…HGAS. Positions 1877–1888 are enriched in low complexity; the sequence is SAAESQQQESAA.

The protein belongs to the E3 ubiquitin-protein ligase UBR1-like family. Selectively interacts (via UBR-type zinc finger) with the cleaved form of Diap1; this interaction is enhanced by tal. Interacts with tal and Rrp1. Interacts with ovo isoform B (via N-terminus). Interacts with Cad99C (via the cytoplasmic domain). Interacts with ck and Sans. Interacts with cos (via Kinesin motor domain). In vitro, self-ubiquitination in the presence of E1, E2 and ubiquitin.

The protein resides in the cytoplasm. Its subcellular location is the nucleus. The catalysed reaction is S-ubiquitinyl-[E2 ubiquitin-conjugating enzyme]-L-cysteine + [acceptor protein]-L-lysine = [E2 ubiquitin-conjugating enzyme]-L-cysteine + N(6)-ubiquitinyl-[acceptor protein]-L-lysine.. Its pathway is protein modification; protein ubiquitination. Its function is as follows. E3 ubiquitin-protein ligase which is a component of the N-end rule pathway. Recognizes and binds to proteins bearing specific N-terminal residues, leading to their ubiquitination and subsequent degradation. Binds to the E3 ubiquitin-protein ligase Diap1 and enhances its ubiquitination and anti-apoptotic functions. Essential during trichome development for the ubiquitination of the N-terminus of ovo isoform B (svb), converting it from a transcriptional inhibitor to an activator. Positively regulates a hh-signaling pathway which functions in photoreceptor differentiation. Activation of hh up-regulates transcription of Ubr3, which in turn promotes hh signaling by mediating the ubiquitination and degradation of cos. Necessary for auditory transduction: plays a role in Johnston's organ organization by acting in the regulation of zip and ck function in scolopidial apical attachment. Likely to function by acting in a pathway that negatively regulates the ubiquitination of zip, consequently affecting its interaction with ck. May also negatively regulate a component of the SCF (SKP1-CUL1-F-box protein) E3 ubiquitin-protein ligase complex Cul1, which also appears to function in the negative regulation of the zip-ck interaction and scolopidial apical attachment. This chain is E3 ubiquitin-protein ligase Ubr3, found in Drosophila melanogaster (Fruit fly).